A 433-amino-acid chain; its full sequence is E3 ubiquitin-protein ligase RGLG5 (433 aa).

The interval 1-61 (MGGSSSKESP…SYNSGRQTPK (61 aa)) is disordered. Residue G2 is the site of N-myristoyl glycine attachment. A compositionally biased stretch (low complexity) spans 22–39 (SVSGSSSYSSAWDQSSYY). The segment covering 40-61 (QTPNHPSASPVSSYNSGRQTPK) has biased composition (polar residues). The region spanning 93 to 313 (NLIVGIDVTK…KEAEFALSAL (221 aa)) is the VWFA domain. The disordered stretch occupies residues 340-383 (IALPPPTYATQSMRNSPRTSRSTSFQNKPYDNGVSSTPPSTTHN). A compositionally biased stretch (polar residues) spans 347 to 383 (YATQSMRNSPRTSRSTSFQNKPYDNGVSSTPPSTTHN). The RING-type zinc-finger motif lies at 390-423 (CPVCLVSAKNMAFNCGHQTCAGCGEDLHVCPICR).

Interacts with PP2CA. Post-translationally, N-myristoylated.

The protein localises to the cell membrane. It catalyses the reaction S-ubiquitinyl-[E2 ubiquitin-conjugating enzyme]-L-cysteine + [acceptor protein]-L-lysine = [E2 ubiquitin-conjugating enzyme]-L-cysteine + N(6)-ubiquitinyl-[acceptor protein]-L-lysine.. Functionally, together with RGLG1, mediates the ubiquitination and subsequent proteasomal degradation of the target protein PP2CA. Functions as a positive regulator of abscisic acid (ABA) signaling through ABA-dependent degradation of PP2CA, a major inhibitor of ABA signaling. The protein is E3 ubiquitin-protein ligase RGLG5 of Arabidopsis thaliana (Mouse-ear cress).